Reading from the N-terminus, the 370-residue chain is 1-propanol dehydrogenase PduQ (370 aa).

Belongs to the iron-containing alcohol dehydrogenase family. Interacts with PduP, probably via the N-terminus of PduQ. It depends on Fe cation as a cofactor.

The protein resides in the bacterial microcompartment. The catalysed reaction is 1-propanol + NAD(+) = propanal + NADH + H(+). It functions in the pathway polyol metabolism; 1,2-propanediol degradation. Its activity is regulated as follows. Enzyme is oxygen sensitive. In terms of biological role, an iron-dependent alcohol dehydrogenase required for optimal 1,2-propanediol (1,2-PD) degradation. NAD(+) and NADH are regenerated internally within the bacterial microcompartment (BMC) dedicated to 1,2-PD degradation by the PduP and PduQ enzymes, which reduce NAD(+) and oxidize NADH respectively, although there must also be cofactor transport across the BMC. Functionally, the 1,2-PD-specific bacterial microcompartment (BMC) concentrates low levels of 1,2-PD catabolic enzymes, concentrates volatile reaction intermediates thus enhancing pathway flux and keeps the level of toxic, mutagenic propionaldehyde low. The protein is 1-propanol dehydrogenase PduQ of Salmonella typhimurium (strain LT2 / SGSC1412 / ATCC 700720).